Reading from the N-terminus, the 160-residue chain is Ribosomal RNA large subunit methyltransferase H (160 aa).

S-adenosyl-L-methionine is bound by residues leucine 76, glycine 108, and 127–132; that span reads LGKMTW.

This sequence belongs to the RNA methyltransferase RlmH family. In terms of assembly, homodimer.

The protein localises to the cytoplasm. The catalysed reaction is pseudouridine(1915) in 23S rRNA + S-adenosyl-L-methionine = N(3)-methylpseudouridine(1915) in 23S rRNA + S-adenosyl-L-homocysteine + H(+). Functionally, specifically methylates the pseudouridine at position 1915 (m3Psi1915) in 23S rRNA. In Rhizobium etli (strain CIAT 652), this protein is Ribosomal RNA large subunit methyltransferase H.